The primary structure comprises 307 residues: Aspartate carbamoyltransferase catalytic subunit (307 aa).

Residues arginine 58 and threonine 59 each coordinate carbamoyl phosphate. Residue lysine 86 participates in L-aspartate binding. 3 residues coordinate carbamoyl phosphate: arginine 108, histidine 136, and glutamine 139. Arginine 169 and arginine 223 together coordinate L-aspartate. Carbamoyl phosphate is bound by residues glycine 264 and proline 265.

The protein belongs to the aspartate/ornithine carbamoyltransferase superfamily. ATCase family. In terms of assembly, heterododecamer (2C3:3R2) of six catalytic PyrB chains organized as two trimers (C3), and six regulatory PyrI chains organized as three dimers (R2).

The enzyme catalyses carbamoyl phosphate + L-aspartate = N-carbamoyl-L-aspartate + phosphate + H(+). Its pathway is pyrimidine metabolism; UMP biosynthesis via de novo pathway; (S)-dihydroorotate from bicarbonate: step 2/3. Its function is as follows. Catalyzes the condensation of carbamoyl phosphate and aspartate to form carbamoyl aspartate and inorganic phosphate, the committed step in the de novo pyrimidine nucleotide biosynthesis pathway. The protein is Aspartate carbamoyltransferase catalytic subunit of Moorella thermoacetica (strain ATCC 39073 / JCM 9320).